We begin with the raw amino-acid sequence, 201 residues long: GTP-binding protein ryh1 (201 aa).

Residue 18–25 participates in GTP binding; sequence GEQSVGKT. Positions 40–48 match the Effector region motif; sequence YQATIGIDF. Residues 66-70 and 124-127 contribute to the GTP site; these read DTAGQ and NKTD. 2 S-geranylgeranyl cysteine lipidation sites follow: C199 and C201. Cysteine methyl ester is present on C201.

The protein belongs to the small GTPase superfamily. Rab family.

The protein localises to the endosome membrane. It is found in the golgi apparatus membrane. It localises to the nucleus. Its subcellular location is the cytoplasm. The protein resides in the cytosol. Functionally, has a role in retrograde traffricking of proteins from the endosome to the Golgi. Involved in protein transport to the plasma membrane. Involved in the secretory pathway where it has a role in acid phosphatase secretion. Required also in normal glycosylation trafficking pathways. The polypeptide is GTP-binding protein ryh1 (ryh1) (Schizosaccharomyces pombe (strain 972 / ATCC 24843) (Fission yeast)).